Consider the following 167-residue polypeptide: Epithelial membrane protein 2 (167 aa).

Residues 1–21 form a helical membrane-spanning segment; the sequence is MLVLLAFIIAFHITSAALLFI. N-linked (GlcNAc...) asparagine glycosylation is found at Asn-44, Asn-47, and Asn-52. Transmembrane regions (helical) follow at residues 67 to 87, 95 to 115, and 143 to 163; these read TMIL…LQLF, FVLT…AASI, and YILA…YLIL.

This sequence belongs to the PMP-22/EMP/MP20 family. As to quaternary structure, interacts with PTK2; regulates PTK2 activation and localization. Interacts with ITGB3; regulates the levels of the heterodimer ITGA5-ITGB3 integrin surface expression. Interacts with P2RX7 (via C-terminus). Interacts with ITGB1; the interaction may be direct or indirect and ITGB1 has a heterodimer form. Expressed in ciliary body epithelia, sclera, cornea, and retinal pigment epithelium (at protein level). Expressed in lung and endometrial tissue; expression is particularly abundant in secretory endometrium (at protein level). Expressed in placental villous syncytiotrophoblasts and cytotrophoblasts and on the membrane of interstitial trophoblasts (at protein level).

Its subcellular location is the golgi apparatus membrane. The protein localises to the cell membrane. It localises to the apical cell membrane. The protein resides in the membrane raft. It is found in the cytoplasm. Its subcellular location is the nucleus. The protein localises to the perinuclear region. Functionally, functions as a key regulator of cell membrane composition by regulating protein surface expression. Also, plays a role in regulation of processes including cell migration, cell proliferation, cell contraction and cell adhesion. Regulates transepithelial migration of neutrophils into the alveolar lumen, potentially via mediation of cell surface expression of adhesion markers and lipid raft formation. Negatively regulates caveolae formation by reducing CAV1 expression and CAV1 amount by increasing lysosomal degradation. Facilitates surface trafficking and formation of lipid rafts bearing GPI-anchor proteins. Regulates surface expression of MHC1 and ICAM1 proteins increasing susceptibility to T-cell mediated cytotoxicity. Regulates the plasma membrane expression of the integrin heterodimers ITGA6-ITGB1, ITGA5-ITGB3 and ITGA5-ITGB1 resulting in modulation of cell-matrix adhesion. Also regulates many processes through PTK2. Regulates blood vessel endothelial cell migration and angiogenesis by regulating VEGF protein expression through PTK2 activation. Regulates cell migration and cell contraction through PTK2 and SRC activation. Regulates focal adhesion density, F-actin conformation and cell adhesion capacity through interaction with PTK2. Positively regulates cell proliferation. Plays a role during cell death and cell blebbing. Promotes angiogenesis and vasculogenesis through induction of VEGFA via a HIF1A-dependent pathway. Also plays a role in embryo implantation by regulating surface trafficking of integrin heterodimer ITGA5-ITGB3. Plays a role in placental angiogenesis and uterine natural killer cell regulation at the maternal-fetal placental interface, however not required in the maternal tissues for a viable pregnancy. Involved in the early stages of embryogenic development and cardiogenesis, potentially via regulation of epithelial-mesenchymal transition timing. May play a role in glomerular filtration. The polypeptide is Epithelial membrane protein 2 (EMP2) (Homo sapiens (Human)).